A 93-amino-acid chain; its full sequence is MKSTPFFYPEAIVLAYLYDNEGIATYDLYKKVNAEFPMSTATFYDAKKFLIQEGFVKERQERGEKRLYLTEKGKLFAISLKTAIETYKQIKKR.

In terms of assembly, homodimer.

Probable transcription factor that recognizes a (pseudo-)palindromic DNA target sequence. This Saccharolobus solfataricus (Sulfolobus solfataricus) protein is Protein F-93.